The primary structure comprises 125 residues: Neuropeptide B (125 aa).

An N-terminal signal peptide occupies residues 1–24 (MARSATLAAAALALCLLLAPPGLA). Residues 54 to 73 (RRSQPYRGAEPPGGAGASPE) form a disordered region. The propeptide occupies 56–125 (SQPYRGAEPP…SLRAADCLAA (70 aa)).

This sequence belongs to the neuropeptide B/W family. Widely expressed in the central nervous system. High levels are found in substantia nigra, hypothalamus, hippocampus, spinal cord, placenta and fetal brain; lower levels are found in testis, uterus and ovary. Also detected at high levels in colorectal adenocarcinoma.

The protein resides in the secreted. Functionally, may be involved in the regulation of feeding, neuroendocrine system, memory, learning and in the afferent pain pathway. This is Neuropeptide B (NPB) from Homo sapiens (Human).